We begin with the raw amino-acid sequence, 433 residues long: UPF0597 protein Spea_0809 (433 aa).

Belongs to the UPF0597 family.

This chain is UPF0597 protein Spea_0809, found in Shewanella pealeana (strain ATCC 700345 / ANG-SQ1).